We begin with the raw amino-acid sequence, 170 residues long: Putative 3-methyladenine DNA glycosylase (170 aa).

This sequence belongs to the DNA glycosylase MPG family.

This is Putative 3-methyladenine DNA glycosylase from Sodalis glossinidius.